The sequence spans 401 residues: Shugoshin (401 aa).

Positions 3–49 form a coiled coil; it reads SKVEQQYKLLNAELMDQVQKQRLEIGEYRKRVISLEREIMDIREEHV. Positions 82-197 are disordered; the sequence is EPAPAAQINR…VEETQTEQNE (116 aa). Residues 98–108 show a composition bias toward basic and acidic residues; sequence SSREICKDMRR. The span at 114-137 shows a compositional bias: low complexity; it reads RTTRPISPRRSSSVTSTVSSTSRR. S124, S125, and S126 each carry phosphoserine; by AurB. Residues 171–183 show a composition bias toward acidic residues; it reads VFDEDDSDDDFDE. T331 is modified (phosphothreonine; by PLK1). The interval 338 to 401 is disordered; sequence EEMPSIRTRS…GSKGKAKAKK (64 aa). Polar residues predominate over residues 348–377; sequence RTAANKKSENTDMSSSFCNNSARPSRSCRP. The span at 387-401 shows a compositional bias: basic residues; it reads NKLRNGSKGKAKAKK.

It belongs to the shugoshin family. As to quaternary structure, homodimer. Interacts with Incenp. In terms of processing, phosphorylation by polo-like kinase (PLK) on Thr-331 antagonizes cohesive function. Phosphorylation on Thr-331 at the metaphase anaphase transition leads to its dissociation from centromeres. In contrast, phosphorylation by aurB/ial on either Ser-124, Ser-125 or Ser-126 is required for association with centromeres.

Its subcellular location is the chromosome. The protein resides in the centromere. Functionally, plays a central role in chromosome cohesion during meiosis and mitosis by preventing premature dissociation of cohesin complex from centromeres after prophase, when most of cohesin complex dissociates from chromosomes arms. May act by protecting or Rad21 from cleavage by Sse/separase. Required during meiosis in both males and females. The chain is Shugoshin (mei-S332) from Drosophila melanogaster (Fruit fly).